We begin with the raw amino-acid sequence, 74 residues long: NAD(P)H-quinone oxidoreductase subunit O (74 aa).

It belongs to the complex I NdhO subunit family. NDH-1 can be composed of about 15 different subunits; different subcomplexes with different compositions have been identified which probably have different functions.

The protein resides in the cellular thylakoid membrane. It catalyses the reaction a plastoquinone + NADH + (n+1) H(+)(in) = a plastoquinol + NAD(+) + n H(+)(out). It carries out the reaction a plastoquinone + NADPH + (n+1) H(+)(in) = a plastoquinol + NADP(+) + n H(+)(out). NDH-1 shuttles electrons from an unknown electron donor, via FMN and iron-sulfur (Fe-S) centers, to quinones in the respiratory and/or the photosynthetic chain. The immediate electron acceptor for the enzyme in this species is believed to be plastoquinone. Couples the redox reaction to proton translocation, and thus conserves the redox energy in a proton gradient. Cyanobacterial NDH-1 also plays a role in inorganic carbon-concentration. In Synechococcus sp. (strain RCC307), this protein is NAD(P)H-quinone oxidoreductase subunit O.